The chain runs to 564 residues: Ferric/cupric reductase transmembrane component 2 (564 aa).

The next 2 membrane-spanning stretches (helical) occupy residues threonine 10–leucine 30 and phenylalanine 66–leucine 86. Asparagine 106 carries N-linked (GlcNAc...) asparagine glycosylation. The helical transmembrane segment at valine 110–leucine 130 threads the bilayer. The 116-residue stretch at leucine 114–isoleucine 229 folds into the Ferric oxidoreductase domain. Histidine 150 and histidine 164 together coordinate heme. Helical transmembrane passes span tryptophan 152–serine 172, isoleucine 184–proline 204, and phenylalanine 210–tryptophan 230. Residues histidine 218 and histidine 232 each coordinate heme. Residues arginine 254–valine 410 enclose the FAD-binding FR-type domain. Residue asparagine 261 is glycosylated (N-linked (GlcNAc...) asparagine). Histidine 310 to serine 316 is a binding site for FAD. An N-linked (GlcNAc...) asparagine glycan is attached at asparagine 350. Residue leucine 419–serine 427 coordinates NAD(+). N-linked (GlcNAc...) asparagine glycans are attached at residues asparagine 442, asparagine 496, and asparagine 548.

The protein belongs to the ferric reductase (FRE) family. FAD serves as cofactor. The cofactor is heme.

The protein localises to the cell membrane. It is found in the endoplasmic reticulum membrane. It catalyses the reaction 2 a Fe(II)-siderophore + NADP(+) + H(+) = 2 a Fe(III)-siderophore + NADPH. Metalloreductase responsible for reducing extracellular iron and copper prior to import. Catalyzes the reductive uptake of Fe(3+)-salts and Fe(3+) bound to catecholate or hydroxamate siderophores. Fe(3+) is reduced to Fe(2+), which then dissociates from the siderophore and can be imported by the high-affinity Fe(2+) transport complex in the plasma membrane. Also participates in Cu(2+) reduction and Cu(+) uptake. The chain is Ferric/cupric reductase transmembrane component 2 (frp2) from Schizosaccharomyces pombe (strain 972 / ATCC 24843) (Fission yeast).